The primary structure comprises 488 residues: 3-octaprenyl-4-hydroxybenzoate carboxy-lyase (488 aa).

Residue N172 participates in Mn(2+) binding. Prenylated FMN is bound by residues 175–177 (IYR), 189–191 (RWL), and 194–195 (RG). A Mn(2+)-binding site is contributed by E238. D287 functions as the Proton donor in the catalytic mechanism.

The protein belongs to the UbiD family. Homohexamer. Requires prenylated FMN as cofactor. It depends on Mn(2+) as a cofactor.

It localises to the cell membrane. The catalysed reaction is a 4-hydroxy-3-(all-trans-polyprenyl)benzoate + H(+) = a 2-(all-trans-polyprenyl)phenol + CO2. It participates in cofactor biosynthesis; ubiquinone biosynthesis. Functionally, catalyzes the decarboxylation of 3-octaprenyl-4-hydroxy benzoate to 2-octaprenylphenol, an intermediate step in ubiquinone biosynthesis. The chain is 3-octaprenyl-4-hydroxybenzoate carboxy-lyase from Pseudomonas aeruginosa (strain LESB58).